The chain runs to 361 residues: Eukaryotic translation initiation factor 3 subunit F (361 aa).

The segment at 1–86 (MATPAVPVSA…PAPALPGPAL (86 aa)) is disordered. The residue at position 2 (Ala-2) is an N-acetylalanine. Composition is skewed to pro residues over residues 9 to 20 (SAPPATPAPVPA) and 30 to 40 (VPAPTPAPAAA). A compositionally biased stretch (low complexity) spans 41–78 (PVPAAAPASSSDPAAAAATTAAPGQTPASAQAPAQTPA). Ser-50 bears the Phosphoserine; by CDK11; in vitro mark. Positions 96 to 226 (VRLHPVILAS…IKAYVSTLMG (131 aa)) constitute an MPN domain. Lys-242 bears the N6-acetyllysine mark. Ser-262 is modified (phosphoserine).

It belongs to the eIF-3 subunit F family. Component of the eukaryotic translation initiation factor 3 (eIF-3) complex, which is composed of 13 subunits: EIF3A, EIF3B, EIF3C, EIF3D, EIF3E, EIF3F, EIF3G, EIF3H, EIF3I, EIF3J, EIF3K, EIF3L and EIF3M. The eIF-3 complex appears to include 3 stable modules: module A is composed of EIF3A, EIF3B, EIF3G and EIF3I; module B is composed of EIF3F, EIF3H, and EIF3M; and module C is composed of EIF3C, EIF3D, EIF3E, EIF3K and EIF3L. EIF3C of module C binds EIF3B of module A and EIF3H of module B, thereby linking the three modules. EIF3J is a labile subunit that binds to the eIF-3 complex via EIF3B. The eIF-3 complex interacts with RPS6KB1 under conditions of nutrient depletion. Mitogenic stimulation leads to binding and activation of a complex composed of MTOR and RPTOR, leading to phosphorylation and release of RPS6KB1 and binding of EIF4B to eIF-3. Interacts with RNF139; the interaction leads to protein translation inhibitions in a ubiquitination-dependent manner. Interacts with DTX1, the interaction is required for deubiquitinating activity towards NOTCH1. In terms of processing, phosphorylation is enhanced upon serum stimulation. Phosphorylated during apoptosis by caspase-processed CDK11.

It is found in the cytoplasm. The catalysed reaction is Thiol-dependent hydrolysis of ester, thioester, amide, peptide and isopeptide bonds formed by the C-terminal Gly of ubiquitin (a 76-residue protein attached to proteins as an intracellular targeting signal).. Component of the eukaryotic translation initiation factor 3 (eIF-3) complex, which is required for several steps in the initiation of protein synthesis. The eIF-3 complex associates with the 40S ribosome and facilitates the recruitment of eIF-1, eIF-1A, eIF-2:GTP:methionyl-tRNAi and eIF-5 to form the 43S pre-initiation complex (43S PIC). The eIF-3 complex stimulates mRNA recruitment to the 43S PIC and scanning of the mRNA for AUG recognition. The eIF-3 complex is also required for disassembly and recycling of post-termination ribosomal complexes and subsequently prevents premature joining of the 40S and 60S ribosomal subunits prior to initiation. The eIF-3 complex specifically targets and initiates translation of a subset of mRNAs involved in cell proliferation, including cell cycling, differentiation and apoptosis, and uses different modes of RNA stem-loop binding to exert either translational activation or repression. Functionally, deubiquitinates activated NOTCH1, promoting its nuclear import, thereby acting as a positive regulator of Notch signaling. This chain is Eukaryotic translation initiation factor 3 subunit F, found in Pan troglodytes (Chimpanzee).